The following is a 142-amino-acid chain: Transcription antitermination protein NusB (142 aa).

The protein belongs to the NusB family.

Its function is as follows. Involved in transcription antitermination. Required for transcription of ribosomal RNA (rRNA) genes. Binds specifically to the boxA antiterminator sequence of the ribosomal RNA (rrn) operons. This is Transcription antitermination protein NusB from Roseiflexus castenholzii (strain DSM 13941 / HLO8).